The following is a 180-amino-acid chain: Cytokinin-beta-glucosidase 2 (180 aa).

Functionally, hydrolyzes cytokinin glucosides thus liberating free cytokinins. The chain is Cytokinin-beta-glucosidase 2 (ROLC2) from Panax ginseng (Korean ginseng).